A 330-amino-acid chain; its full sequence is Phosphate acyltransferase (330 aa).

The protein belongs to the PlsX family. As to quaternary structure, homodimer. Probably interacts with PlsY.

The protein localises to the cytoplasm. The catalysed reaction is a fatty acyl-[ACP] + phosphate = an acyl phosphate + holo-[ACP]. The protein operates within lipid metabolism; phospholipid metabolism. Catalyzes the reversible formation of acyl-phosphate (acyl-PO(4)) from acyl-[acyl-carrier-protein] (acyl-ACP). This enzyme utilizes acyl-ACP as fatty acyl donor, but not acyl-CoA. The protein is Phosphate acyltransferase of Bacillus thuringiensis (strain Al Hakam).